The following is a 343-amino-acid chain: Follistatin (343 aa).

The first 28 residues, M1–A28, serve as a signal peptide directing secretion. The TB domain maps to G29–G102. 8 disulfides stabilise this stretch: C31/C54, C41/C87, C55/C90, C94/C105, C99/C115, C117/C149, C121/C142, and C131/C163. The Follistatin-like 1 domain maps to T93 to V116. 3 Kazal-like domains span residues C99–K165, N185–K240, and R263–S317. N123 carries an N-linked (GlcNAc...) asparagine glycan. The 24-residue stretch at T166–V189 folds into the Follistatin-like 2 domain. Intrachain disulfides connect C191/C224, C195/C217, and C206/C238. Positions S243–A267 constitute a Follistatin-like 3 domain. 3 cysteine pairs are disulfide-bonded: C269–C301, C273–C294, and C283–C315. The N-linked (GlcNAc...) asparagine glycan is linked to N287. The disordered stretch occupies residues C315–W343. Positions E320–D332 are enriched in acidic residues.

Monomer. As to expression, ciliary ganglion neurons. Levels are higher in the iris than the choroid.

Its subcellular location is the secreted. Functionally, binds directly to activin and functions as an activin antagonist. Inhibits activin A signaling in the iris and regulates somatostatin phenotype in ciliary ganglion neurons. Specific inhibitor of the biosynthesis and secretion of pituitary follicle stimulating hormone (FSH). This chain is Follistatin (FST), found in Gallus gallus (Chicken).